Consider the following 226-residue polypeptide: MARKEWKVLLIEDDPMVQEVNKDFITTVKGVTVCATAGNGEEGMKLIKEEQPDLVILDVYMPKKDGIKTLQEIRKQKLEVDVIVVSAAKDKETISLMLQNGAVDYILKPFKLERMRQALEKYKQYKQKIEANDTLSQEQLDAILNIPQQAVQDLPKGLNHFTMNEVTAFLKQQTASLSAEEVAKALGIARVTARRYLDYLEKTGIIKLDVQYGGVGRPVNRYVLKG.

The Response regulatory domain occupies 7 to 123; the sequence is KVLLIEDDPM…RMRQALEKYK (117 aa). Residue Asp-58 is modified to 4-aspartylphosphate. The H-T-H motif DNA-binding region spans 179–198; the sequence is AEEVAKALGIARVTARRYLD.

In terms of processing, phosphorylated by DctS.

The protein resides in the cytoplasm. Its function is as follows. Member of the two-component regulatory system DctS/DctR. Essential for expression of dctP. The chain is Probable C4-dicarboxylate response regulator DctR (dctR) from Bacillus subtilis (strain 168).